We begin with the raw amino-acid sequence, 452 residues long: Exodeoxyribonuclease 7 large subunit (452 aa).

The protein belongs to the XseA family. Heterooligomer composed of large and small subunits.

It is found in the cytoplasm. It carries out the reaction Exonucleolytic cleavage in either 5'- to 3'- or 3'- to 5'-direction to yield nucleoside 5'-phosphates.. Its function is as follows. Bidirectionally degrades single-stranded DNA into large acid-insoluble oligonucleotides, which are then degraded further into small acid-soluble oligonucleotides. In Bacillus mycoides (strain KBAB4) (Bacillus weihenstephanensis), this protein is Exodeoxyribonuclease 7 large subunit.